Here is a 1032-residue protein sequence, read N- to C-terminus: Reticulon-3 (1032 aa).

The span at 1-24 (MAEPSAATQSHSISSSSFGAEPSA) shows a compositional bias: low complexity. The interval 1–61 (MAEPSAATQS…SSSSSQPVSL (61 aa)) is disordered. Ala2 carries the N-acetylalanine modification. At 2 to 863 (AEPSAATQSH…KKTGFVFGTT (862 aa)) the chain is on the cytoplasmic side. Ser30 carries the post-translational modification Phosphoserine. The span at 32-61 (GACPALGTKSCSSSCADSFVSSSSSQPVSL) shows a compositional bias: low complexity. Ser229, Ser243, Ser246, Ser283, Ser316, and Ser453 each carry phosphoserine. The segment covering 545–568 (CEREEKTSKNFEELVSDSELHQDQ) has biased composition (basic and acidic residues). Residues 545–617 (CEREEKTSKN…NPKLPSTVSP (73 aa)) are disordered. Residues 605-617 (TTENPKLPSTVSP) are compositionally biased toward polar residues. Residues Ser649 and Ser650 each carry the phosphoserine modification. The segment covering 696–715 (NESGGSEIKDIGSKYSEQSK) has biased composition (basic and acidic residues). The segment at 696–726 (NESGGSEIKDIGSKYSEQSKETNGSEPLGVF) is disordered. The residue at position 735 (Ser735) is a Phosphoserine. A Reticulon domain is found at 844–1032 (VHDLIFWRDV…LPGIAKKKAE (189 aa)). An intramembrane region (helical) is located at residues 864-887 (LIMLLSLAAFSVISVVSYLILALL). The Cytoplasmic segment spans residues 888–947 (SVTISFRIYKSVIQAVQKSEEGHPFKAYLDVDITLSSEAFHNYMNAAMVHINRALKLIIR). The segment at residues 948 to 968 (LFLVEDLVDSLKLAVFMWLMT) is an intramembrane region (helical). Residues 969 to 972 (YVGA) are Cytoplasmic-facing. The segment at residues 973–993 (VFNGITLLILAELLIFSVPIV) is an intramembrane region (helical). An interaction with FADD region spans residues 987–1032 (IFSVPIVYEKYKTQIDHYVGIARDQTKSIVEKIQAKLPGIAKKKAE). The Cytoplasmic portion of the chain corresponds to 994 to 1032 (YEKYKTQIDHYVGIARDQTKSIVEKIQAKLPGIAKKKAE). An interaction with BACE1 region spans residues 1000-1002 (QID).

Homodimer. Interacts with ATL1. Interacts with RTN4. Isoform 3 interacts with BACE1, BACE2, BCL2 and FADD. Interacts with ATL2. Interacts with TMEM33. Interacts with ZFYVE27 and with KIF5A in a ZFYVE27-dependent manner. Interacts with RIGI. Interacts with TRIM25. In terms of assembly, (Microbial infection) Interacts with Coxsackievirus A16, enterovirus 71 and poliovirus P2C proteins. As to quaternary structure, (Microbial infection) Interacts with West Nile virus protein NS4A. In terms of tissue distribution, isoform 3 is widely expressed, with highest levels in brain, where it is enriched in neuronal cell bodies from gray matter (at protein level). Three times more abundant in macula than in peripheral retina. Isoform 1 is expressed at high levels in brain and at low levels in skeletal muscle. Isoform 2 is only found in melanoma.

It localises to the endoplasmic reticulum membrane. Its subcellular location is the golgi apparatus membrane. Functionally, may be involved in membrane trafficking in the early secretory pathway. Inhibits BACE1 activity and amyloid precursor protein processing. May induce caspase-8 cascade and apoptosis. May favor BCL2 translocation to the mitochondria upon endoplasmic reticulum stress. Induces the formation of endoplasmic reticulum tubules. Also acts as an inflammation-resolving regulator by interacting with both TRIM25 and RIGI, subsequently impairing RIGI 'Lys-63'-linked polyubiquitination leading to IRF3 and NF-kappa-B inhibition. Its function is as follows. (Microbial infection) Plays a positive role in viral replication and pathogenesis of enteroviruses. This chain is Reticulon-3 (RTN3), found in Homo sapiens (Human).